A 231-amino-acid polypeptide reads, in one-letter code: Probable transaldolase (231 aa).

Catalysis depends on Lys-83, which acts as the Schiff-base intermediate with substrate.

It belongs to the transaldolase family. Type 3B subfamily.

Its subcellular location is the cytoplasm. It carries out the reaction D-sedoheptulose 7-phosphate + D-glyceraldehyde 3-phosphate = D-erythrose 4-phosphate + beta-D-fructose 6-phosphate. The protein operates within carbohydrate degradation; pentose phosphate pathway; D-glyceraldehyde 3-phosphate and beta-D-fructose 6-phosphate from D-ribose 5-phosphate and D-xylulose 5-phosphate (non-oxidative stage): step 2/3. Transaldolase is important for the balance of metabolites in the pentose-phosphate pathway. This is Probable transaldolase from Rhodospirillum centenum (strain ATCC 51521 / SW).